The chain runs to 242 residues: Ribosomal RNA small subunit methyltransferase G (242 aa).

Residues glycine 81, phenylalanine 86, 104–106 (DST), 132–133 (AE), and arginine 151 contribute to the S-adenosyl-L-methionine site.

It belongs to the methyltransferase superfamily. RNA methyltransferase RsmG family.

It localises to the cytoplasm. Functionally, specifically methylates the N7 position of a guanine in 16S rRNA. This Synechococcus elongatus (strain ATCC 33912 / PCC 7942 / FACHB-805) (Anacystis nidulans R2) protein is Ribosomal RNA small subunit methyltransferase G.